A 403-amino-acid chain; its full sequence is Alkaline protease 1 (403 aa).

An N-terminal signal peptide occupies residues 1–21 (MQSIKRTLLLLGAILPAVLGA). The propeptide occupies 22-125 (PVQETRRAAE…QIYYLDGLTT (104 aa)). Residues 36–120 (KYIVTFKPGI…YVEEDQIYYL (85 aa)) form the Inhibitor I9 domain. The Peptidase S8 domain maps to 130–403 (PWGLGSISHK…PNLLAYNGNA (274 aa)). Active-site charge relay system residues include Asp-162 and His-193. A glycan (N-linked (GlcNAc...) asparagine) is linked at Asn-253. Ser-349 (charge relay system) is an active-site residue.

Belongs to the peptidase S8 family.

The protein resides in the secreted. It carries out the reaction Hydrolysis of proteins with broad specificity, and of Bz-Arg-OEt &gt; Ac-Tyr-OEt. Does not hydrolyze peptide amides.. Secreted alkaline protease that allows assimilation of proteinaceous substrates. The chain is Alkaline protease 1 (alp1) from Aspergillus flavus (strain ATCC 200026 / FGSC A1120 / IAM 13836 / NRRL 3357 / JCM 12722 / SRRC 167).